A 358-amino-acid polypeptide reads, in one-letter code: Aromatic amino acid aminotransferase (358 aa).

N6-(pyridoxal phosphate)lysine is present on Lys-222.

This sequence belongs to the class-II pyridoxal-phosphate-dependent aminotransferase family. As to quaternary structure, homodimer. The cofactor is pyridoxal 5'-phosphate.

The catalysed reaction is an aromatic L-alpha-amino acid + 2-oxoglutarate = an aromatic oxo-acid + L-glutamate. In terms of biological role, aminotransferase that catalyzes the conversion of aromatic amino acids and 2-oxoglutarate into corresponding aromatic oxo acids and L-glutamate. In Mycobacterium sp. (strain KMS), this protein is Aromatic amino acid aminotransferase.